A 973-amino-acid polypeptide reads, in one-letter code: Splicing regulator ARVCF (973 aa).

Positions 95–123 are disordered; that stretch reads VTVEEDPGTPTSHVSIVTSEDGTTRRTET. 2 positions are modified to phosphothreonine: threonine 103 and threonine 105. Polar residues predominate over residues 103 to 115; sequence TPTSHVSIVTSED. At arginine 171 the chain carries Omega-N-methylarginine. Disordered regions lie at residues 233-254 and 267-331; these read RREA…LPEH and RSLA…QPER. The residue at position 268 (serine 268) is a Phosphoserine. Positions 271–281 are enriched in acidic residues; sequence ADDEGGPDLEP. Residues 289 to 303 show a composition bias toward basic and acidic residues; it reads RRPEYGRGLRARALE. Phosphoserine occurs at positions 333, 336, 344, and 346. ARM repeat units lie at residues 349–388, 391–430, 434–468, 469–509, 527–566, and 576–623; these read STRK…HLCF, EGIK…NLSY, ADNK…VTGT, LWNL…NEDS, LRNV…DTDN, and MRNL…GKKA. The tract at residues 593 to 623 is disordered; sequence YQEVEPGIPGSAATSQRRRKDDASCFGGKKA. Residue serine 607 is modified to Phosphoserine. A Nuclear localization signal motif is present at residues 608–624; that stretch reads QRRRKDDASCFGGKKAK. At threonine 637 the chain carries Phosphothreonine. ARM repeat units follow at residues 641–681, 694–733, 734–776, and 777–821; these read PKRT…AAGA, TYIR…NLSL, DQRN…AVLN, and TIHE…SHVL. The required for interaction with RNA-binding proteins DDX5, HNRNPH2 and SRSF1 and with mRNAs stretch occupies residues 771 to 955; sequence VVAVLNTIHE…VLGPGAPPFC (185 aa). The tract at residues 844–926 is disordered; sequence FQSASTAKGP…KELLKGPGPA (83 aa). Phosphoserine is present on serine 865. Threonine 866 carries the phosphothreonine modification. Basic and acidic residues predominate over residues 872–881; sequence KNLDGEKSTT.

This sequence belongs to the beta-catenin family. In terms of assembly, component of a ribonucleoprotein complex containing mRNAs and RNA-binding proteins including DDX5, HNRNPH2 and SRSF1 as well as ARVCF. Interacts (via the extreme C-terminus) with FRMPD2 (via the PDZ 2 domain). Interacts with CCDC85B. Expressed in optic nerve sheath envelope (at protein level). Expressed in heart (at protein level).

It localises to the cell junction. The protein resides in the adherens junction. It is found in the nucleus. The protein localises to the cytoplasm. Contributes to the regulation of alternative splicing of pre-mRNAs. The sequence is that of Splicing regulator ARVCF from Rattus norvegicus (Rat).